Here is a 130-residue protein sequence, read N- to C-terminus: Small ribosomal subunit protein uS8 (130 aa).

It belongs to the universal ribosomal protein uS8 family. Part of the 30S ribosomal subunit. Contacts proteins S5 and S12.

Its function is as follows. One of the primary rRNA binding proteins, it binds directly to 16S rRNA central domain where it helps coordinate assembly of the platform of the 30S subunit. The sequence is that of Small ribosomal subunit protein uS8 from Vibrio parahaemolyticus serotype O3:K6 (strain RIMD 2210633).